The primary structure comprises 38 residues: Large ribosomal subunit protein bL36 (38 aa).

Belongs to the bacterial ribosomal protein bL36 family.

In Bacteroides fragilis (strain ATCC 25285 / DSM 2151 / CCUG 4856 / JCM 11019 / LMG 10263 / NCTC 9343 / Onslow / VPI 2553 / EN-2), this protein is Large ribosomal subunit protein bL36.